The chain runs to 440 residues: C4-dicarboxylate transport protein (440 aa).

The next 9 helical transmembrane spans lie at 15–35 (VLVA…TGVA), 46–66 (LIKM…IAGM), 78–98 (YALL…LVVV), 146–166 (AFAN…GFAL), 190–210 (IINM…AFTI), 224–244 (LMAC…GGIC), 291–311 (VVGL…SIYL), 332–352 (ITLL…TGSG), and 354–374 (IVLA…LALI). The segment at 420–440 (GAPLVDTRPTDDLGVAEGPAR) is disordered.

This sequence belongs to the dicarboxylate/amino acid:cation symporter (DAACS) (TC 2.A.23) family.

It localises to the cell inner membrane. Functionally, responsible for the transport of dicarboxylates such as succinate, fumarate, and malate from the periplasm across the membrane. The sequence is that of C4-dicarboxylate transport protein from Pseudomonas putida (strain ATCC 700007 / DSM 6899 / JCM 31910 / BCRC 17059 / LMG 24140 / F1).